The chain runs to 107 residues: Phosphoribosyl-ATP pyrophosphatase (107 aa).

Belongs to the PRA-PH family.

The protein resides in the cytoplasm. The enzyme catalyses 1-(5-phospho-beta-D-ribosyl)-ATP + H2O = 1-(5-phospho-beta-D-ribosyl)-5'-AMP + diphosphate + H(+). It participates in amino-acid biosynthesis; L-histidine biosynthesis; L-histidine from 5-phospho-alpha-D-ribose 1-diphosphate: step 2/9. The protein is Phosphoribosyl-ATP pyrophosphatase of Novosphingobium aromaticivorans (strain ATCC 700278 / DSM 12444 / CCUG 56034 / CIP 105152 / NBRC 16084 / F199).